Here is a 652-residue protein sequence, read N- to C-terminus: Nucleolar GTP-binding protein 1 (652 aa).

The OBG-type G domain maps to 169-341 (RTIIICGFPN…VKTEACERLL (173 aa)). Residues 175-182 (GFPNVGKS), 221-225 (DTPGI), and 289-292 (NKID) contribute to the GTP site. The disordered stretch occupies residues 501-521 (RLSSRKNKPVIPRNKQPKVRD).

It belongs to the TRAFAC class OBG-HflX-like GTPase superfamily. OBG GTPase family. NOG subfamily.

It is found in the nucleus. It localises to the nucleolus. Its function is as follows. Involved in the biogenesis of the 60S ribosomal subunit. Required for normal assembly of the mitotic spindle. May be involved in both centrosome-dependent and centrosome-independent spindle assembly programs. Acts as a TP53 repressor, preventing TP53 stabilization and cell cycle arrest. The sequence is that of Nucleolar GTP-binding protein 1 from Drosophila melanogaster (Fruit fly).